Here is a 352-residue protein sequence, read N- to C-terminus: Isoflavone-7-O-methyltransferase 8 (352 aa).

118–127 (VLDPTLSGSY) lines the substrate pocket. Residues glycine 196, aspartate 219, aspartate 239, methionine 240, and lysine 253 each contribute to the S-adenosyl-L-methionine site. Histidine 257 (proton acceptor) is an active-site residue.

The protein belongs to the class I-like SAM-binding methyltransferase superfamily. Cation-independent O-methyltransferase family. COMT subfamily. In terms of assembly, homodimer.

It carries out the reaction a 7-hydroxyisoflavone + S-adenosyl-L-methionine = a 7-methoxyisoflavone + S-adenosyl-L-homocysteine + H(+). Its pathway is phytoalexin biosynthesis; medicarpin biosynthesis. Transfers a methyl group to 7-hydroxyls of the isoflavones daidzein, genistein and 6,7,4'-trihydroxyisoflavone. Can also methylate (+)6a-hydroxymaackiain with lower efficiency. The protein is Isoflavone-7-O-methyltransferase 8 of Medicago sativa (Alfalfa).